Reading from the N-terminus, the 288-residue chain is Release factor glutamine methyltransferase (288 aa).

Residues glycine 123–glycine 127, aspartate 146, and asparagine 190 each bind S-adenosyl-L-methionine. Position 190–193 (asparagine 190–tyrosine 193) interacts with substrate.

It belongs to the protein N5-glutamine methyltransferase family. PrmC subfamily.

The catalysed reaction is L-glutaminyl-[peptide chain release factor] + S-adenosyl-L-methionine = N(5)-methyl-L-glutaminyl-[peptide chain release factor] + S-adenosyl-L-homocysteine + H(+). Functionally, methylates the class 1 translation termination release factors RF1/PrfA and RF2/PrfB on the glutamine residue of the universally conserved GGQ motif. This chain is Release factor glutamine methyltransferase, found in Bacillus subtilis (strain 168).